The chain runs to 158 residues: Cyclic pyranopterin monophosphate synthase (158 aa).

Residues 75–77 and 113–114 each bind substrate; these read LCH and ME. Asp-128 is an active-site residue.

The protein belongs to the MoaC family. As to quaternary structure, homohexamer; trimer of dimers.

It carries out the reaction (8S)-3',8-cyclo-7,8-dihydroguanosine 5'-triphosphate = cyclic pyranopterin phosphate + diphosphate. It functions in the pathway cofactor biosynthesis; molybdopterin biosynthesis. Catalyzes the conversion of (8S)-3',8-cyclo-7,8-dihydroguanosine 5'-triphosphate to cyclic pyranopterin monophosphate (cPMP). In Paraburkholderia phytofirmans (strain DSM 17436 / LMG 22146 / PsJN) (Burkholderia phytofirmans), this protein is Cyclic pyranopterin monophosphate synthase.